A 771-amino-acid chain; its full sequence is Hyperosmolality-gated Ca2+ permeable channel 1.2 (771 aa).

Residues 1–4 (MATL) lie on the Extracellular side of the membrane. A helical membrane pass occupies residues 5–27 (QDIGVSAGINILSAFVFFIIFAV). The Cytoplasmic segment spans residues 28 to 100 (LRLQPFNDRV…AGLDSVVYLR (73 aa)). A helical transmembrane segment spans residues 101–125 (IYWLGLKIFTPIAVLAWAVLVPVNW). Topologically, residues 126–156 (TNNTLEMAKQLRNVTSSDIDKLSVSNIPEYS) are extracellular. The helical transmembrane segment at 157–178 (MRFWTHIVMAYAFTIWTCYVLM) threads the bilayer. Residues 179–374 (KEYETIANMR…AIPYVSLTVR (196 aa)) lie on the Cytoplasmic side of the membrane. Residues 375–401 (RLIMHVAFFFLTFFFIVPIAFVQSLAT) traverse the membrane as a helical segment. Topologically, residues 402–419 (IEGIVKAAPFLKFIVDDK) are extracellular. Residues 420-445 (FMKSVIQGFLPGIALKLFLAFLPSIL) traverse the membrane as a helical segment. Residues 446–462 (MIMSKFEGFTSISSLER) are Cytoplasmic-facing. Residues 463–485 (RAAFRYYIFNLVNVFLASVIAGA) form a helical membrane-spanning segment. Over 486 to 504 (AFEQLNSFLNQSANQIPKT) the chain is Extracellular. Residues 505 to 533 (IGVAIPMKATFFITYIMVDGWAGVAGEIL) traverse the membrane as a helical segment. Residues 534 to 566 (MLKPLIMFHLKNAFLVKTDKDREEAMDPGSIGF) lie on the Cytoplasmic side of the membrane. Residues 567–588 (NTGEPRIQLYFLLGLVYAPVTP) form a helical membrane-spanning segment. M589 is a topological domain (extracellular). The chain crosses the membrane as a helical span at residues 590–605 (LLPFILVFFALAYIVY). Topologically, residues 606–625 (RHQIINVYNQEYESAAAFWP) are cytoplasmic. The helical transmembrane segment at 626-648 (DVHGRVIAALVISQLLLMGLLGT) threads the bilayer. Over 649-651 (KHA) the chain is Extracellular. The chain crosses the membrane as a helical span at residues 652–670 (ALAAPFLIALPVLTIGFHH). Over 671–771 (FCKGRYEPAF…PSLPFSGKLV (101 aa)) the chain is Cytoplasmic. Residues 741-771 (PTKRQSRRNTPAPSIISGDDSPSLPFSGKLV) form a disordered region.

This sequence belongs to the CSC1 (TC 1.A.17) family. Homodimer.

The protein resides in the membrane. Activated by hyperosmotic shock after mannitol or NaCl treatment. Activated by mechanical pressure: activated in response to membrane stretch and poke. Membrane lipids play a key role in mechanosensation by acting as a wall mainly formed by lipid head groups. In terms of biological role, acts as an osmosensitive calcium-permeable cation channel. Specifically conducts cations including Ca(2+), K(+) and Na(+) in vitro. Inactivation or closure of the channel is calcium-dependent. Mechanosensitive ion channel that converts mechanical stimuli into a flow of ions: activated in response to membrane stretch and poke. The chain is Hyperosmolality-gated Ca2+ permeable channel 1.2 from Arabidopsis thaliana (Mouse-ear cress).